Consider the following 207-residue polypeptide: Ras-related protein RABH1e (207 aa).

16–23 (GDQSVGKT) contacts GTP. An Effector region motif is present at residues 38-46 (YQATIGIDF). Residues 64 to 68 (DTAGQ), 122 to 125 (NKTD), and 152 to 153 (SA) contribute to the GTP site. Residues Cys205 and Cys207 are each lipidated (S-geranylgeranyl cysteine). Residue Cys207 is modified to Cysteine methyl ester.

This sequence belongs to the small GTPase superfamily. Rab family.

The protein localises to the golgi apparatus membrane. Its function is as follows. Protein transport. Regulator of membrane traffic from the Golgi apparatus towards the endoplasmic reticulum (ER). The chain is Ras-related protein RABH1e (RABH1E) from Arabidopsis thaliana (Mouse-ear cress).